We begin with the raw amino-acid sequence, 501 residues long: NADH-quinone oxidoreductase subunit N (501 aa).

The next 14 helical transmembrane spans lie at 4-24 (HLPILIVIIPLFVAMAARLLV), 34-54 (FVLAAALAVLASGAVALAETL), 80-100 (LAGGLIVLVAFFGLAALVYAG), 112-132 (GSFYALFLLAKAGLLGMCATG), 134-154 (LFNLYVFLEISSLAAYALIAF), 167-187 (LIIGTAAACFYLLGVGYLYAM), 207-227 (PVVILALVFIVAGLGIKMALF), 241-261 (PAPVLAFMAAVMTKVSAYALY), 278-298 (LQVLGWMAAAGILFGSIMAIA), 314-334 (VGYIVLGLAVGNVLALYGALL), 335-355 (HVLSHALVKGGLFFIAGGVSW), 376-396 (MGAFVAAALSMIGLPPTLGFF), 409-429 (GAWVFVAVLVVSSLLTAVYFF), and 463-483 (PASMLVPILVLGIGVVVLGLF).

It belongs to the complex I subunit 2 family. In terms of assembly, NDH-1 is composed of 14 different subunits. Subunits NuoA, H, J, K, L, M, N constitute the membrane sector of the complex.

It is found in the cell membrane. It catalyses the reaction a quinone + NADH + 5 H(+)(in) = a quinol + NAD(+) + 4 H(+)(out). NDH-1 shuttles electrons from NADH, via FMN and iron-sulfur (Fe-S) centers, to quinones in the respiratory chain. The immediate electron acceptor for the enzyme in this species is believed to be a menaquinone. Couples the redox reaction to proton translocation (for every two electrons transferred, four hydrogen ions are translocated across the cytoplasmic membrane), and thus conserves the redox energy in a proton gradient. This Desulforudis audaxviator (strain MP104C) protein is NADH-quinone oxidoreductase subunit N.